A 1714-amino-acid chain; its full sequence is Intersectin-1 (1714 aa).

One can recognise an EH 1 domain in the interval Glu-21–Ile-109. Residues Leu-53 to Lys-88 enclose the EF-hand 1 domain. 5 residues coordinate Ca(2+): Asp-66, Asn-68, Asp-70, Arg-72, and Glu-77. At Ser-203 the chain carries Phosphoserine. An EH 2 domain is found at Ser-221 to Arg-310. One can recognise an EF-hand 2 domain in the interval Leu-254–Ala-289. The Ca(2+) site is built by Asp-267, Asp-269, Asp-271, Lys-273, and Glu-278. Residues Arg-310–Val-325 show a composition bias toward low complexity. Disordered regions lie at residues Arg-310 to Asn-356 and Ser-614 to Leu-706. A phosphoserine mark is found at Ser-318, Ser-334, and Ser-335. Residues Asp-326–Lys-702 are KLERQ. Basic and acidic residues-rich tracts occupy residues Gln-340–Asn-356 and Arg-622–Leu-706. The stretch at Arg-354 to Gln-658 forms a coiled coil. Position 685 is a phosphoserine (Ser-685). An SH3 1 domain is found at Val-738–Glu-799. The interval Ala-827–Trp-863 is disordered. The segment covering Val-831–Asn-855 has biased composition (polar residues). Phosphothreonine is present on Thr-890. Ser-894, Ser-895, and Ser-897 each carry phosphoserine. The SH3 2 domain occupies Val-906 to Gly-964. Ser-971 carries the post-translational modification Phosphoserine. Thr-977 bears the Phosphothreonine mark. Phosphoserine occurs at positions 979 and 988. SH3 domains lie at Ile-995 to Ser-1053 and Lys-1067 to Pro-1131. The required for interaction with FCHSD2 stretch occupies residues Lys-1067 to Pro-1131. The Bipartite nuclear localization signal; in isoform 2 signature appears at Arg-1097 to Trp-1120. Ser-1130 bears the Phosphoserine mark. Thr-1137 is modified (phosphothreonine). In terms of domain architecture, SH3 5 spans Pro-1148–Asp-1207. The DH domain occupies Lys-1230–Gly-1416. The PH domain maps to Lys-1455 to Glu-1564. One can recognise a C2 domain in the interval Lys-1572 to Val-1688. Ser-1638 carries the post-translational modification Phosphoserine. The Ca(2+) site is built by Asp-1660, Ser-1663, and Asp-1666.

As to quaternary structure, interacts (via DH domain) with CDC42. Interacts (via SH3 domain 1) with WASL. Interacts with dynamin, SNAP25 and SNAP23. Interacts with clathrin-associated proteins and other components of the endocytic machinery, such as SPIN90, EPS15, EPN1, EPN2, STON2, FCHO1, FCHO2 and DAB2. Interacts (via SH3 domains) with REPS1 and SGIP1. Interacts with ARHGAP31. Interacts with ADAM15. Interacts with PRRT2. Interacts (via SH3 domain 4) with FCHSD2 (via SH3 domain 2). Interacts (via SH3 domain 1) with DENND2B. Interacts (via SH3 domains) with CBL. Isoform 2: Interacts with CBL and DNM1. Isoform 2: Interacts with LMNA. Isoform 2: Interacts with importin subunit KPNA1; this is likely to mediate its import into the nucleus. Interacts with DNM2. Requires Ca(2+) as cofactor. In terms of tissue distribution, detected in brain, adrenal gland and heart. Detected in neurons at the calyx of Held (at protein level). Isoform 1: Primarily detected in brain neurons. Isoform 2: Primarily detected in glia (at protein level). Widely expressed. Expressed at high levels in brain, heart and skeletal muscle.

It localises to the endomembrane system. Its subcellular location is the synapse. The protein resides in the synaptosome. It is found in the cell projection. The protein localises to the lamellipodium. It localises to the cell membrane. Its subcellular location is the membrane. The protein resides in the clathrin-coated pit. It is found in the recycling endosome. The protein localises to the endosome. It localises to the cytoplasmic vesicle. Its subcellular location is the cytoplasm. The protein resides in the nucleus envelope. Its function is as follows. Adapter protein that provides a link between the endocytic membrane traffic and the actin assembly machinery. Acts as a guanine nucleotide exchange factor (GEF) for CDC42, and thereby stimulates actin nucleation mediated by WASL and the ARP2/3 complex. Plays a role in the assembly and maturation of clathrin-coated vesicles. Recruits FCHSD2 to clathrin-coated pits. Involved in endocytosis of activated EGFR, and probably also other growth factor receptors. Involved in endocytosis of integrin beta-1 (ITGB1) and transferrin receptor (TFR); internalization of ITGB1 as DAB2-dependent cargo but not TFR may involve association with DAB2. Promotes ubiquitination and subsequent degradation of EGFR, and thereby contributes to the down-regulation of EGFR-dependent signaling pathways. In chromaffin cells, required for normal exocytosis of catecholamines. Required for rapid replenishment of release-ready synaptic vesicles at presynaptic active zones. Inhibits ARHGAP31 activity toward RAC1. In terms of biological role, plays a role in synaptic vesicle endocytosis in brain neurons. This Mus musculus (Mouse) protein is Intersectin-1.